Reading from the N-terminus, the 251-residue chain is HTH-type transcriptional regulator UlaR (251 aa).

The region spanning 3–58 (EAQRHQILLEMLAQLGFVTVEKVVERLGISPATARRDINKLDESGKLKKVRNGAEA) is the HTH deoR-type domain. A DNA-binding region (H-T-H motif) is located at residues 20–39 (VTVEKVVERLGISPATARRD).

It is found in the cytoplasm. In terms of biological role, represses ulaG and the ulaABCDEF operon. The polypeptide is HTH-type transcriptional regulator UlaR (Escherichia coli (strain SMS-3-5 / SECEC)).